Consider the following 169-residue polypeptide: 2-C-methyl-D-erythritol 2,4-cyclodiphosphate synthase (169 aa).

Residues Asp-13 and His-15 each coordinate a divalent metal cation. Residues 13–15 (DVH) and 39–40 (HS) contribute to the 4-CDP-2-C-methyl-D-erythritol 2-phosphate site. A divalent metal cation is bound at residue His-47. Residues 61–63 (DIG), 66–70 (FPDTD), Phe-144, and Arg-147 each bind 4-CDP-2-C-methyl-D-erythritol 2-phosphate.

Belongs to the IspF family. Homotrimer. A divalent metal cation serves as cofactor.

It carries out the reaction 4-CDP-2-C-methyl-D-erythritol 2-phosphate = 2-C-methyl-D-erythritol 2,4-cyclic diphosphate + CMP. Its pathway is isoprenoid biosynthesis; isopentenyl diphosphate biosynthesis via DXP pathway; isopentenyl diphosphate from 1-deoxy-D-xylulose 5-phosphate: step 4/6. Functionally, involved in the biosynthesis of isopentenyl diphosphate (IPP) and dimethylallyl diphosphate (DMAPP), two major building blocks of isoprenoid compounds. Catalyzes the conversion of 4-diphosphocytidyl-2-C-methyl-D-erythritol 2-phosphate (CDP-ME2P) to 2-C-methyl-D-erythritol 2,4-cyclodiphosphate (ME-CPP) with a corresponding release of cytidine 5-monophosphate (CMP). This Cupriavidus necator (strain ATCC 17699 / DSM 428 / KCTC 22496 / NCIMB 10442 / H16 / Stanier 337) (Ralstonia eutropha) protein is 2-C-methyl-D-erythritol 2,4-cyclodiphosphate synthase.